The primary structure comprises 463 residues: Serine carboxypeptidase-like 32 (463 aa).

The N-terminal stretch at 1–22 (MMNISNVSIALYLCTLFAFVSS) is a signal peptide. Disulfide bonds link Cys86-Cys345, Cys249-Cys262, and Cys286-Cys313. A glycan (N-linked (GlcNAc...) asparagine) is linked at Asn137. Ser179 is an active-site residue. Asn201 and Asn250 each carry an N-linked (GlcNAc...) asparagine glycan. 2 N-linked (GlcNAc...) asparagine glycosylation sites follow: Asn341 and Asn354. Active-site residues include Asp384 and His436.

Belongs to the peptidase S10 family. In terms of tissue distribution, expressed in flowers.

It localises to the secreted. In terms of biological role, probable carboxypeptidase. In Arabidopsis thaliana (Mouse-ear cress), this protein is Serine carboxypeptidase-like 32 (SCPL32).